The sequence spans 508 residues: Photosystem II CP47 reaction center protein (508 aa).

Transmembrane regions (helical) follow at residues 21 to 36 (SVHIMHTALVSGWAGS), 101 to 115 (IVFSGLCFLAAIWHW), 140 to 156 (GIHLFLSGVACFGFGAF), 203 to 218 (IAAGTLGILAGLFHLS), 237 to 252 (VLSSSIAAVFFAAFVV), and 457 to 472 (TFALLFFFGHIWHGAR).

The protein belongs to the PsbB/PsbC family. PsbB subfamily. PSII is composed of 1 copy each of membrane proteins PsbA, PsbB, PsbC, PsbD, PsbE, PsbF, PsbH, PsbI, PsbJ, PsbK, PsbL, PsbM, PsbT, PsbX, PsbY, PsbZ, Psb30/Ycf12, at least 3 peripheral proteins of the oxygen-evolving complex and a large number of cofactors. It forms dimeric complexes. The cofactor is Binds multiple chlorophylls. PSII binds additional chlorophylls, carotenoids and specific lipids..

The protein resides in the plastid. It is found in the chloroplast thylakoid membrane. Functionally, one of the components of the core complex of photosystem II (PSII). It binds chlorophyll and helps catalyze the primary light-induced photochemical processes of PSII. PSII is a light-driven water:plastoquinone oxidoreductase, using light energy to abstract electrons from H(2)O, generating O(2) and a proton gradient subsequently used for ATP formation. In Chloranthus spicatus (Chulantree), this protein is Photosystem II CP47 reaction center protein.